The following is a 93-amino-acid chain: Small ribosomal subunit protein uS19 (93 aa).

Belongs to the universal ribosomal protein uS19 family.

In terms of biological role, protein S19 forms a complex with S13 that binds strongly to the 16S ribosomal RNA. The protein is Small ribosomal subunit protein uS19 of Mycobacterium tuberculosis (strain ATCC 25177 / H37Ra).